Consider the following 390-residue polypeptide: MRVVLIVLDSVGIGEMPDAHLYGDEGSNTIVNTAKAVGGLHLPNMAKLGLGNLDDIPGVEPVKPAEGIYGKMMEKSPGKDTTTGHWEIAGVILKKPFDLFPNGFPKELIEEFERRTGRKVIGNKPASGTEIIKELGPIHEKTGALIVYTSADSVFQIAAKKEIVPVEELYRYCKIARELLDEMGYKVARVIARPFTGEWPNYVRTPERKDFSLEPEGKTLLDVLTENGIPVYGVGKIADIFAGRGVTENYKTKDNNDGIDKTISLMKEKNHDCLIFTNLVDFDTKYGHRNDPVSYARALEEFDVRLPEIIQNLKEDDVLFITADHGCDPTTPSTDHSREMVPLLGYGGRLKKDVYVGIRETFADLGQTIADIFGVPPLENGTSFKNLIWE.

Mn(2+) contacts are provided by Asp9, Asp283, His288, Asp324, His325, and His336.

Belongs to the phosphopentomutase family. It depends on Mn(2+) as a cofactor.

The protein resides in the cytoplasm. The catalysed reaction is 2-deoxy-alpha-D-ribose 1-phosphate = 2-deoxy-D-ribose 5-phosphate. It catalyses the reaction alpha-D-ribose 1-phosphate = D-ribose 5-phosphate. Its pathway is carbohydrate degradation; 2-deoxy-D-ribose 1-phosphate degradation; D-glyceraldehyde 3-phosphate and acetaldehyde from 2-deoxy-alpha-D-ribose 1-phosphate: step 1/2. Its function is as follows. Isomerase that catalyzes the conversion of deoxy-ribose 1-phosphate (dRib-1-P) and ribose 1-phosphate (Rib-1-P) to deoxy-ribose 5-phosphate (dRib-5-P) and ribose 5-phosphate (Rib-5-P), respectively. This chain is Phosphopentomutase, found in Thermotoga petrophila (strain ATCC BAA-488 / DSM 13995 / JCM 10881 / RKU-1).